Here is a 1278-residue protein sequence, read N- to C-terminus: NPC intracellular cholesterol transporter 1 (1278 aa).

Positions 1-22 are cleaved as a signal peptide; that stretch reads MTARGLALGLLLLLLCPAQVFS. The Lumenal segment spans residues 23–261; the sequence is QSCVWYGECG…QPPPPPAPWT (239 aa). Disulfide bonds link Cys25–Cys74, Cys31–Cys42, Cys63–Cys109, Cys75–Cys113, Cys97–Cys238, Cys100–Cys160, Cys177–Cys184, Cys227–Cys243, and Cys240–Cys247. Asn41 contributes to the cholesterol binding site. The N-linked (GlcNAc...) asparagine glycan is linked to Asn70. Residue Gln79 participates in cholesterol binding. Asn122 and Asn135 each carry an N-linked (GlcNAc...) asparagine glycan. N-linked (GlcNAc...) asparagine; atypical glycosylation occurs at Asn158. The segment at 175–205 is important for cholesterol binding and cholesterol transfer from NPC1 to liposomes; the sequence is LLCGKDADACNATNWIEYMFNKDNGQAPFTI. 2 N-linked (GlcNAc...) asparagine glycosylation sites follow: Asn185 and Asn222. Residues 262-282 form a helical membrane-spanning segment; that stretch reads ILGLDAMYVIMWITYMAFLLV. The Cytoplasmic portion of the chain corresponds to 283 to 350; the sequence is FFGAFFAVWC…RWGSFCVRNP (68 aa). The helical transmembrane segment at 351–371 threads the bilayer; sequence GCVIFFSLVFITACSSGLVFV. Over 372–620 the chain is Lumenal; that stretch reads RVTTNPVDLW…DELNRESDSD (249 aa). Asn452, Asn459, Asn478, Asn524, Asn557, Asn572, and Asn598 each carry an N-linked (GlcNAc...) asparagine glycan. 2 disulfides stabilise this stretch: Cys468–Cys479 and Cys516–Cys533. An SSD domain is found at 620-785; that stretch reads DVFTVVISYA…ITCFVSLLGL (166 aa). A helical membrane pass occupies residues 621–641; the sequence is VFTVVISYAIMFLYISLALGH. The Cytoplasmic portion of the chain corresponds to 642 to 653; sequence MKSCRRLLVDSK. The helical transmembrane segment at 654-675 threads the bilayer; it reads VSLGIAGILIVLSSVACSLGVF. Residues 676–685 lie on the Lumenal side of the membrane; that stretch reads SYIGLPLTLI. Residues 686-706 traverse the membrane as a helical segment; sequence VIEVIPFLVLAVGVDNIFILV. Residues 707 to 730 lie on the Cytoplasmic side of the membrane; sequence QAYQRDERLQGETLDQQLGRVLGE. A helical membrane pass occupies residues 731-751; it reads VAPSMFLSSFSETVAFFLGAL. Residues 752–759 are Lumenal-facing; the sequence is SVMPAVHT. A helical membrane pass occupies residues 760–783; the sequence is FSLFAGLAVFIDFLLQITCFVSLL. The Cytoplasmic portion of the chain corresponds to 784-832; it reads GLDIKRQEKNRLDIFCCVRGAEDGTSVQASESCLFRFFKNSYSPLLLKD. Residues 833 to 853 traverse the membrane as a helical segment; the sequence is WMRPIVIAIFVGVLSFSIAVL. Over 854–1097 the chain is Lumenal; sequence NKVDIGLDQS…YEQYLTIIDD (244 aa). An intrachain disulfide couples Cys909 to Cys914. 6 N-linked (GlcNAc...) asparagine glycosylation sites follow: Asn916, Asn931, Asn961, Asn968, Asn1064, and Asn1072. 3 disulfides stabilise this stretch: Cys956–Cys1011, Cys957–Cys979, and Cys967–Cys976. Residues 1098 to 1118 traverse the membrane as a helical segment; the sequence is TIFNLGVSLGAIFLVTMVLLG. Residues 1119-1124 are Cytoplasmic-facing; it reads CELWSA. A helical transmembrane segment spans residues 1125-1145; it reads VIMCATIAMVLVNMFGVMWLW. The Lumenal segment spans residues 1146–1150; sequence GISLN. Residues 1151–1171 traverse the membrane as a helical segment; sequence AVSLVNLVMSCGISVEFCSHI. Over 1172-1194 the chain is Cytoplasmic; that stretch reads TRAFTVSMKGSRVERAEEALAHM. Residues 1195–1215 form a helical membrane-spanning segment; that stretch reads GSSVFSGITLTKFGGIVVLAF. The Lumenal portion of the chain corresponds to 1216–1223; the sequence is AKSQIFQI. The chain crosses the membrane as a helical span at residues 1224–1244; it reads FYFRMYLAMVLLGATHGLIFL. Residues 1245-1278 are Cytoplasmic-facing; that stretch reads PVLLSYIGPSVNKAKSCATEERYKGTERERLLNF. Positions 1275 to 1278 are required for location in lysosomes; the sequence is LLNF. The short motif at 1275 to 1278 is the Di-leucine motif element; the sequence is LLNF.

This sequence belongs to the patched family. Interacts (via the second lumenal domain) with NPC2. Interacts with TMEM97; the interaction may decrease NPC1 availability to the cell. Interacts with TIM1. Interacts with SLC38A9; this interaction inhibits cholesterol-mediated mTORC1 activation via its sterol transport activity. As to quaternary structure, (Microbial infection) Interacts with ebolavirus glycoprotein. N-glycosylated.

It localises to the late endosome membrane. Its subcellular location is the lysosome membrane. The catalysed reaction is cholesterol(in) = cholesterol(out). Intracellular cholesterol transporter which acts in concert with NPC2 and plays an important role in the egress of cholesterol from the endosomal/lysosomal compartment. Unesterified cholesterol that has been released from LDLs in the lumen of the late endosomes/lysosomes is transferred by NPC2 to the cholesterol-binding pocket in the N-terminal domain of NPC1. Cholesterol binds to NPC1 with the hydroxyl group buried in the binding pocket. Binds oxysterol with higher affinity than cholesterol. May play a role in vesicular trafficking in glia, a process that may be crucial for maintaining the structural and functional integrity of nerve terminals. Inhibits cholesterol-mediated mTORC1 activation throught its interaction with SLC38A9. In terms of biological role, (Microbial infection) Acts as an endosomal entry receptor for ebolavirus. In Homo sapiens (Human), this protein is NPC intracellular cholesterol transporter 1.